The following is a 478-amino-acid chain: Glucose-6-phosphate 1-dehydrogenase (478 aa).

Residues R48, 86-87 (DF), and K142 each bind NADP(+). Substrate-binding residues include H172, K176, E210, and D229. Residue H234 is the Proton acceptor of the active site. Residues K334 and K339 each contribute to the substrate site.

The protein belongs to the glucose-6-phosphate dehydrogenase family.

The enzyme catalyses D-glucose 6-phosphate + NADP(+) = 6-phospho-D-glucono-1,5-lactone + NADPH + H(+). It functions in the pathway carbohydrate degradation; pentose phosphate pathway; D-ribulose 5-phosphate from D-glucose 6-phosphate (oxidative stage): step 1/3. In terms of biological role, catalyzes the oxidation of glucose 6-phosphate to 6-phosphogluconolactone. This chain is Glucose-6-phosphate 1-dehydrogenase, found in Borreliella burgdorferi (strain ATCC 35210 / DSM 4680 / CIP 102532 / B31) (Borrelia burgdorferi).